A 274-amino-acid chain; its full sequence is Proto-oncogene FRAT1 (274 aa).

4 disordered regions span residues 1 to 24 (MPCRREEEEEAGDEAEGEEDDDSF), 55 to 107 (AHDR…PGAV), 132 to 194 (GASA…DDPH), and 232 to 274 (GPLS…VPGS). Over residues 7–23 (EEEEAGDEAEGEEDDDS) the composition is skewed to acidic residues. The involved in GSK-3 binding stretch occupies residues 191–214 (DDPHRLLQQLVLSGNLIKEAVRRL). A phosphoserine mark is found at S243 and S246.

This sequence belongs to the GSK-3-binding protein family. Binds DVL1. Binds GSK-3 and prevent GSK-3-dependent phosphorylation. In terms of processing, phosphorylated. Highly expressed in testis. Lower level of expression in spleen, thymus and brain.

Its subcellular location is the cytoplasm. Functionally, positively regulates the Wnt signaling pathway by stabilizing beta-catenin through the association with GSK-3. May play a role in tumor progression and collaborate with PIM1 and MYC in lymphomagenesis. The protein is Proto-oncogene FRAT1 (Frat1) of Mus musculus (Mouse).